A 227-amino-acid polypeptide reads, in one-letter code: A-type potassium channel modulatory protein KCNIP1 (227 aa).

In terms of domain architecture, EF-hand 1; degenerate spans 38–94 (LEMTMVCHRPEGLEQLEAQTNFTKRELQVLYRGFKNECPSGVVNEDTFKQIYAQFFP). 3 consecutive EF-hand domains span residues 97–132 (DAST…LLRG), 133–168 (TVHE…IYDM), and 181–216 (TPRQ…DDNI). Residues Asp-146, Asn-148, Asp-150, Tyr-152, Glu-157, Asp-194, Asn-196, Asp-198, and Glu-205 each contribute to the Ca(2+) site. The interval 214–227 (DNIMRSLQLFQNVM) is interaction with KCND2.

The protein belongs to the recoverin family. As to quaternary structure, component of heteromultimeric potassium channels. Identified in potassium channel complexes containing KCND1, KCND2, KCND3, KCNIP1, KCNIP2, KCNIP3, KCNIP4, DPP6 and DPP10. Part of a heterooctamer composed of the tetrameric channel and four KCNIP1 chains. Probably part of a complex consisting of KCNIP1, KCNIP2 isoform 3 and KCND2. Self-associates to form homodimers and homotetramers. Interacts with KCNIP2 isoform 3 in a calcium-dependent manner. Interacts with Naja atra venom CTX3. Interacts with KCND2; this interaction mediates the capture of both the N- and C-terminus of KCND2, thus preventing KCND2 N-type inactivation and modulates the channel gating kinetics. Interacts with KCND3; each KCNIP1 monomer interacts with two adjacent KCND3 subunits, through both the N-terminal inactivation ball of a KCND3 subunit and a C-terminal helix from the adjacent KCND3 subunit, clamping them together; this interaction stabilizes the tetrameric form and modulates the channel gating kinetics namely channel activation and inactivation kinetics and rate of recovery from inactivation. Isoform 1 and isoform 2 are expressed in brain and kidney. Isoform 1 is also expressed in liver, pancreas, skeletal muscle, small intestine and testis. Isoform 2 is also expressed in lung, pancreas, leukocytes, prostate and thymus.

It is found in the cell membrane. Its subcellular location is the cytoplasm. The protein resides in the cell projection. It localises to the dendrite. Functionally, regulatory subunit of Kv4/D (Shal)-type voltage-gated rapidly inactivating A-type potassium channels. Regulates channel density, inactivation kinetics and rate of recovery from inactivation in a calcium-dependent and isoform-specific manner. In vitro, modulates KCND1/Kv4.1 and KCND2/Kv4.2 currents. Increases the presence of KCND2 at the cell surface. The sequence is that of A-type potassium channel modulatory protein KCNIP1 from Homo sapiens (Human).